Reading from the N-terminus, the 241-residue chain is Peroxisomal membrane protein 11C (241 aa).

Residues 1 to 122 are Cytoplasmic-facing; sequence MALLNRLASA…ADAKVLRVDS (122 aa). Residues 123 to 149 form a helical membrane-spanning segment; the sequence is AWWWTLNTALWTLSLLLGAVKALWTML. The Lumenal segment spans residues 150 to 211; it reads KLRQKLRSPT…GVLWAGRFPP (62 aa). A helical transmembrane segment spans residues 212–227; that stretch reads WLVGLMGTISSILSTC. Residues 228-241 are Cytoplasmic-facing; the sequence is QAVRAGRQAEADSP.

Belongs to the peroxin-11 family. As to quaternary structure, homodimer. Heterodimer with either PEX11A or PEX11B. Interacts with FIS1. Expressed in liver and at much lower levels in heart, kidney and testis.

The protein localises to the peroxisome membrane. Its function is as follows. Promotes membrane protrusion and elongation on the peroxisomal surface. The protein is Peroxisomal membrane protein 11C (Pex11g) of Mus musculus (Mouse).